The chain runs to 343 residues: MKNVDLVIDLQFGSTGKGLIAGYLAEKNGYDTVINANMPNAGHTYINAEGRKWMHKVLPNGIVSPNLKRVMLGAGSVFSINRLMEEIEMSKDLLHDKVAILIHPMATVLDEEAHKKAEVGIATSIGSTGQGSMAAMVEKLQRDPTNNTIVARDVAQYDGRIAQYVCTVEEWDMALMASERILAEGAQGFSLSLNQEFYPYCTSRDCTPARFLADMGIPLPMLNKVIGTARCHPIRVGGTSGGHYPDQEELTWEQLGQVPELTTVTKKVRRVFSFSFIQMQKAMWTCQPDEVFLNFCNYLSPMGWQDIVHQIEVAAQSRYCDAEVKYLGFGPTFNDVELREDVM.

S14 (proton acceptor) is an active-site residue. Residues S14, T15, G16, K17, and G18 each coordinate ATP. S14 contacts dGMP. S14 provides a ligand contact to Mg(2+). Residue N40 coordinates dGMP. ATP is bound by residues G42, H43, and T44. G42 is a Mg(2+) binding site. DGMP contacts are provided by S127, T128, and R142. Q187 lines the ATP pocket. T202 contributes to the dGMP binding site. T263 is a Mg(2+) binding site. L-aspartate is bound by residues T263, V264, and R269. N294, N297, and G330 together coordinate ATP.

It belongs to the Caudovirales PurZ family. Mg(2+) serves as cofactor.

It carries out the reaction dGMP + L-aspartate + ATP = (2S)-2-amino-2'-deoxyadenylo-succinate + ADP + phosphate + 2 H(+). The protein operates within purine metabolism. Its function is as follows. Involved in the synthesis of the atypical nucleotide dZTP (2-amino-2'-deoxyadenosine-5'-triphosphate). Catalyzes the condensation of aspartate with deoxyguanylate into dSMP (N6-succino-2-amino-2'-deoxyadenylate), which undergoes defumarylation and phosphorylation respectively by host PurB and guanylate/nucleoside diphosphate kinases to give dZTP. dZTP is integrated into the viral genome instead of adenine by the viral DNA polymerase. This Z-base probably completely replaces adenosine and forms a triple bond to the opposite T-base. The resulting non-standard viral DNA is called Z-genome. The chemically modified DNA is probably harder for the host bacteria to digest with nucleases or restriction enzymes. This is N6-succino-2-amino-2'-deoxyadenylate synthase from Vibrio phage phiVC8.